A 585-amino-acid polypeptide reads, in one-letter code: Proline--tRNA ligase (585 aa).

Belongs to the class-II aminoacyl-tRNA synthetase family. ProS type 1 subfamily. As to quaternary structure, homodimer.

The protein resides in the cytoplasm. The catalysed reaction is tRNA(Pro) + L-proline + ATP = L-prolyl-tRNA(Pro) + AMP + diphosphate. Catalyzes the attachment of proline to tRNA(Pro) in a two-step reaction: proline is first activated by ATP to form Pro-AMP and then transferred to the acceptor end of tRNA(Pro). As ProRS can inadvertently accommodate and process non-cognate amino acids such as alanine and cysteine, to avoid such errors it has two additional distinct editing activities against alanine. One activity is designated as 'pretransfer' editing and involves the tRNA(Pro)-independent hydrolysis of activated Ala-AMP. The other activity is designated 'posttransfer' editing and involves deacylation of mischarged Ala-tRNA(Pro). The misacylated Cys-tRNA(Pro) is not edited by ProRS. The chain is Proline--tRNA ligase from Mycolicibacterium vanbaalenii (strain DSM 7251 / JCM 13017 / BCRC 16820 / KCTC 9966 / NRRL B-24157 / PYR-1) (Mycobacterium vanbaalenii).